The following is a 447-amino-acid chain: Transcriptional enhancer factor TEF-4 (447 aa).

Disordered stretches follow at residues Met-1–Ser-46 and Thr-183–Trp-218. Low complexity predominate over residues Asp-11–Glu-20. Residues Glu-25 to Asp-40 show a composition bias toward gly residues. A DNA-binding region (TEA) is located at residues Gly-38–Glu-114. Residues Trp-172–Asp-447 form a transcriptional activation region. The segment covering Thr-183 to Ser-206 has biased composition (low complexity). Residues Pro-207–Pro-216 are compositionally biased toward pro residues.

Interacts with YAP1 and WWTR1/TAZ.

The protein localises to the nucleus. In terms of biological role, transcription factor which plays a key role in the Hippo signaling pathway, a pathway involved in organ size control and tumor suppression by restricting proliferation and promoting apoptosis. The core of this pathway is composed of a kinase cascade wherein MST1/MST2, in complex with its regulatory protein SAV1, phosphorylates and activates LATS1/2 in complex with its regulatory protein MOB1, which in turn phosphorylates and inactivates YAP1 oncoprotein and WWTR1/TAZ. Acts by mediating gene expression of YAP1 and WWTR1/TAZ, thereby regulating cell proliferation, migration and epithelial mesenchymal transition (EMT) induction. Binds to the SPH and GT-IIC 'enhansons' (5'-GTGGAATGT-3'). May be involved in the gene regulation of neural development. Binds to the M-CAT motif. This Homo sapiens (Human) protein is Transcriptional enhancer factor TEF-4 (TEAD2).